We begin with the raw amino-acid sequence, 400 residues long: Cysteine desulfurase 1 (400 aa).

Residues 71 to 72, N150, Q178, and 198 to 200 each bind pyridoxal 5'-phosphate; these read GT and SGH. K201 carries the post-translational modification N6-(pyridoxal phosphate)lysine. A pyridoxal 5'-phosphate-binding site is contributed by T236. Residue C324 is the Cysteine persulfide intermediate of the active site. Residue C324 coordinates [2Fe-2S] cluster.

The protein belongs to the class-V pyridoxal-phosphate-dependent aminotransferase family. NifS/IscS subfamily. As to quaternary structure, homodimer. Pyridoxal 5'-phosphate is required as a cofactor.

It catalyses the reaction (sulfur carrier)-H + L-cysteine = (sulfur carrier)-SH + L-alanine. Catalyzes the removal of elemental sulfur atoms from cysteine to produce alanine. Seems to participate in the biosynthesis of the nitrogenase metalloclusters by providing the inorganic sulfur required for the Fe-S core formation. The chain is Cysteine desulfurase 1 from Trichormus variabilis (strain ATCC 29413 / PCC 7937) (Anabaena variabilis).